Consider the following 60-residue polypeptide: Cytotoxin 3 (60 aa).

4 disulfides stabilise this stretch: Cys3–Cys21, Cys14–Cys38, Cys42–Cys53, and Cys54–Cys59.

Belongs to the three-finger toxin family. Short-chain subfamily. Type IA cytotoxin sub-subfamily. Monomer in solution; Homodimer and oligomer in the presence of negatively charged lipids forming a pore with a size ranging between 20 and 30 Angstroms. In terms of tissue distribution, expressed by the venom gland.

It localises to the secreted. Its subcellular location is the target cell membrane. Shows cytolytic activity on many different cells by forming pore in lipid membranes. In vivo, increases heart rate or kills the animal by cardiac arrest. In addition, it binds to heparin with high affinity, interacts with Kv channel-interacting protein 1 (KCNIP1) in a calcium-independent manner, and binds to integrin alpha-V/beta-3 (ITGAV/ITGB3) with moderate affinity. The chain is Cytotoxin 3 from Naja annulifera (Banded Egyptian cobra).